A 429-amino-acid polypeptide reads, in one-letter code: Chaperone SurA (429 aa).

A signal peptide spans 1–18; it reads MFKRIALVCALFSGVCFA. PpiC domains lie at 170–271 and 281–380; these read NLTY…KLVA and ITQT…EVIA.

It localises to the periplasm. It catalyses the reaction [protein]-peptidylproline (omega=180) = [protein]-peptidylproline (omega=0). Its function is as follows. Chaperone involved in the correct folding and assembly of outer membrane proteins. Recognizes specific patterns of aromatic residues and the orientation of their side chains, which are found more frequently in integral outer membrane proteins. May act in both early periplasmic and late outer membrane-associated steps of protein maturation. The protein is Chaperone SurA of Legionella pneumophila subsp. pneumophila (strain Philadelphia 1 / ATCC 33152 / DSM 7513).